Consider the following 162-residue polypeptide: MQQRSNRRSCSYIPLGVHNNAEKSLCTEVAPARKNKRSITTSPIVNINVVERRLFNLELEKQQLRAKNLSENTGGGSPNGGAYLDAKKGVREQDQYQGGPSKELDRLQPPPSMKKSPPRKKKSLKDLIYETNKTFYQVDSNKVKYKVGLSKKQLLPSKTVDN.

The interval 67–124 is disordered; that stretch reads KNLSENTGGGSPNGGAYLDAKKGVREQDQYQGGPSKELDRLQPPPSMKKSPPRKKKSL. Positions 85 to 94 are enriched in basic and acidic residues; sequence DAKKGVREQD.

In terms of assembly, interacts with RAD51.

The protein localises to the nucleus. Its subcellular location is the chromosome. Its function is as follows. Involved in regulation of meiotic recombination and repair of DNA damage. Inhibits RAD51-mediated recombination when the meiotic recombination machinery is impaired. This chain is Meiosis-specific protein HED1 (HED1), found in Saccharomyces cerevisiae (strain ATCC 204508 / S288c) (Baker's yeast).